Reading from the N-terminus, the 475-residue chain is Aspartyl/glutamyl-tRNA(Asn/Gln) amidotransferase subunit B (475 aa).

Belongs to the GatB/GatE family. GatB subfamily. In terms of assembly, heterotrimer of A, B and C subunits.

The enzyme catalyses L-glutamyl-tRNA(Gln) + L-glutamine + ATP + H2O = L-glutaminyl-tRNA(Gln) + L-glutamate + ADP + phosphate + H(+). It carries out the reaction L-aspartyl-tRNA(Asn) + L-glutamine + ATP + H2O = L-asparaginyl-tRNA(Asn) + L-glutamate + ADP + phosphate + 2 H(+). Allows the formation of correctly charged Asn-tRNA(Asn) or Gln-tRNA(Gln) through the transamidation of misacylated Asp-tRNA(Asn) or Glu-tRNA(Gln) in organisms which lack either or both of asparaginyl-tRNA or glutaminyl-tRNA synthetases. The reaction takes place in the presence of glutamine and ATP through an activated phospho-Asp-tRNA(Asn) or phospho-Glu-tRNA(Gln). The chain is Aspartyl/glutamyl-tRNA(Asn/Gln) amidotransferase subunit B from Helicobacter pylori (strain HPAG1).